The chain runs to 671 residues: MESIEQQLTELRTTLRHHEYLYHVMDAPEIPDAEYDRLMRELRELETKHPELITPDSPTQRVGAAPLAAFSQIRHEVPMLSLDNVFDEESFLAFNKRVQDRLKNNEKVTWCCELKLDGLAVSILYENGVLVSAATRGDGTTGEDITSNVRTIRAIPLKLHGENIPARLEVRGEVFLPQAGFEKINEDARRTGGKVFANPRNAAAGSLRQLDPRITAKRPLTFFCYGVGVLEGGELPDTHLGRLLQFKKWGLPVSDRVTLCESAEEVLAFYHKVEEDRPTLGFDIDGVVIKVNSLEQQEQLGFVARAPRWAVAFKFPAQEQMTFVRDVEFQVGRTGAITPVARLEPVHVAGVLVSNATLHNADEIERLGLRIGDKVVIRRAGDVIPQVVNVVLSERPEDTREVVFPTHCPVCGSDVERVEGEAVARCTGGLICGAQRKESLKHFVSRRAMDVDGMGDKIIDQLVEKEYVHTPADLFKLTAGKLTGLERMGPKSAQNVVNALEKAKETTFARFLYALGIREVGEATAAGLAAYFGTLEALEAASIEELQKVPDVGIVVASHVHNFFAEESNRNVISELLAEGVHWPAPIVINAEEIDSPFAGKTVVLTGSLSQMSRDDAKARLVELGAKVAGSVSKKTDLVIAGEAAGSKLAKAQELGIEVIDEAEMLRLLGS.

NAD(+) is bound by residues 32-36, 81-82, and Glu-113; these read DAEYD and SL. The active-site N6-AMP-lysine intermediate is the Lys-115. The NAD(+) site is built by Arg-136, Glu-173, Lys-290, and Lys-314. Zn(2+) contacts are provided by Cys-408, Cys-411, Cys-426, and Cys-432. The BRCT domain occupies 593–671; that stretch reads EIDSPFAGKT…EAEMLRLLGS (79 aa).

The protein belongs to the NAD-dependent DNA ligase family. LigA subfamily. Mg(2+) is required as a cofactor. The cofactor is Mn(2+).

The catalysed reaction is NAD(+) + (deoxyribonucleotide)n-3'-hydroxyl + 5'-phospho-(deoxyribonucleotide)m = (deoxyribonucleotide)n+m + AMP + beta-nicotinamide D-nucleotide.. In terms of biological role, DNA ligase that catalyzes the formation of phosphodiester linkages between 5'-phosphoryl and 3'-hydroxyl groups in double-stranded DNA using NAD as a coenzyme and as the energy source for the reaction. It is essential for DNA replication and repair of damaged DNA. The sequence is that of DNA ligase from Escherichia coli (strain SE11).